Reading from the N-terminus, the 214-residue chain is uncharacterized protein (214 aa).

Transmembrane regions (helical) follow at residues 4–23, 35–57, 67–89, 96–118, 128–150, 155–177, and 187–209; these read VSIVEIFLIISLPLLFFSSF, SFVHGAVLAVPLLLLRSFFLGYY, QWMRFFLFDYVFPLFCLPFFLFT, VSLVSGVSALFGAYTSFFFVHVY, ARVMTLVLYMTNLLQLHAHVSFS, LPLLGLIAALCIFLLMGAFSATV, and TVVYTSMLAGAGGVALLTHFFAV.

Its subcellular location is the cell membrane. This is an uncharacterized protein from Treponema pallidum (strain Nichols).